A 544-amino-acid chain; its full sequence is Prolyl 4-hydroxylase subunit alpha-3 (544 aa).

An N-terminal signal peptide occupies residues 1–19; sequence MGPAARLAALLAVLAFRAG. Residues 107 to 131 are a coiled coil; the sequence is LEASENIRALKDGYERVEQDLPAFE. Residues 227-260 form a TPR repeat; the sequence is EDALDHLAFAYFQAGNVLCALNLSREFLLYSPDN. A glycan (N-linked (GlcNAc...) asparagine) is linked at Asn-248. The region spanning 422-529 is the Fe2OG dioxygenase domain; that stretch reads YAEYLQVVNY…KWVANKWIHE (108 aa). His-440 and Asp-442 together coordinate Fe cation. Asn-482 carries an N-linked (GlcNAc...) asparagine glycan. Residue His-510 participates in Fe cation binding. Residue Lys-520 coordinates 2-oxoglutarate.

This sequence belongs to the P4HA family. Heterotetramer of two alpha-3 chains and two beta chains (the beta chain is the multi-functional PDI). Requires Fe(2+) as cofactor. The cofactor is L-ascorbate. N-glycosylation plays no role in the catalytic activity.

The protein localises to the endoplasmic reticulum lumen. The enzyme catalyses L-prolyl-[collagen] + 2-oxoglutarate + O2 = trans-4-hydroxy-L-prolyl-[collagen] + succinate + CO2. Its function is as follows. Catalyzes the post-translational formation of 4-hydroxyproline in -Xaa-Pro-Gly- sequences in collagens and other proteins. This Bos taurus (Bovine) protein is Prolyl 4-hydroxylase subunit alpha-3 (P4HA3).